A 196-amino-acid chain; its full sequence is Peptide methionine sulfoxide reductase (196 aa).

Positions methionine 1–proline 14 are enriched in polar residues. The disordered stretch occupies residues methionine 1–proline 23.

This sequence belongs to the MsrA Met sulfoxide reductase family.

The enzyme catalyses L-methionyl-[protein] + [thioredoxin]-disulfide + H2O = L-methionyl-(S)-S-oxide-[protein] + [thioredoxin]-dithiol. The catalysed reaction is [thioredoxin]-disulfide + L-methionine + H2O = L-methionine (S)-S-oxide + [thioredoxin]-dithiol. Has an important function as a repair enzyme for proteins that have been inactivated by oxidation. Catalyzes the reversible oxidation-reduction of methionine sulfoxide in proteins to methionine. The protein is Peptide methionine sulfoxide reductase (E4) of Solanum lycopersicum (Tomato).